Consider the following 225-residue polypeptide: Germin-like protein 8-7 (225 aa).

The first 23 residues, 1–23 (MASPSSFCLLAVLLALVSWQAIA), serve as a signal peptide directing secretion. Cysteines 33 and 48 form a disulfide. One can recognise a Cupin type-1 domain in the interval 63–213 (AMLDTPRKTN…AFQVEKGTID (151 aa)). A glycan (N-linked (GlcNAc...) asparagine) is linked at Asn-77. Positions 110, 112, and 117 each coordinate Mn(2+). N-linked (GlcNAc...) asparagine glycosylation occurs at Asn-136. His-158 contributes to the Mn(2+) binding site.

Belongs to the germin family. Oligomer (believed to be a pentamer but probably hexamer).

Its subcellular location is the secreted. It localises to the extracellular space. The protein localises to the apoplast. Its function is as follows. Plays a role in broad-spectrum disease resistance. Probably has no oxalate oxidase activity even if the active site is conserved. The protein is Germin-like protein 8-7 (GER6) of Oryza sativa subsp. japonica (Rice).